Consider the following 185-residue polypeptide: Peptidyl-tRNA hydrolase (185 aa).

TRNA is bound at residue tyrosine 14. The Proton acceptor role is filled by histidine 19. Residues tyrosine 64, asparagine 66, and asparagine 112 each coordinate tRNA.

It belongs to the PTH family. As to quaternary structure, monomer.

The protein localises to the cytoplasm. The catalysed reaction is an N-acyl-L-alpha-aminoacyl-tRNA + H2O = an N-acyl-L-amino acid + a tRNA + H(+). In terms of biological role, hydrolyzes ribosome-free peptidyl-tRNAs (with 1 or more amino acids incorporated), which drop off the ribosome during protein synthesis, or as a result of ribosome stalling. Catalyzes the release of premature peptidyl moieties from peptidyl-tRNA molecules trapped in stalled 50S ribosomal subunits, and thus maintains levels of free tRNAs and 50S ribosomes. This is Peptidyl-tRNA hydrolase from Shouchella clausii (strain KSM-K16) (Alkalihalobacillus clausii).